Here is a 439-residue protein sequence, read N- to C-terminus: Kelch domain-containing protein 10 (439 aa).

Residues 1 to 50 (MSAAQGWDRNRRRGGGAAGGASGVSGAGAAGGGRGTGQLNRFVQLSGRPH) are disordered. R13 carries the post-translational modification Omega-N-methylarginine. Residues 15–36 (GGAAGGASGVSGAGAAGGGRGT) show a composition bias toward gly residues. Kelch repeat units lie at residues 87-154 (PARS…LASM), 155-198 (SLVL…SCRG), 199-260 (KRPS…RYRH), 261-319 (EIAH…HSCV), 320-364 (QIKN…VYFH), and 365-403 (CAAV…PSLL). An interaction with CUL2 region spans residues 398–439 (VVPSLLELAWEKLLAAFPNLANLSRTQLLHLGLTQELIERLK).

The protein belongs to the KLHDC10 family. In terms of assembly, component of a CRL2 E3 ubiquitin-protein ligase complex, also named ECS (Elongin BC-CUL2/5-SOCS-box protein) complex, composed of CUL2, Elongin BC (ELOB and ELOC), RBX1 and substrate-specific adapter KLHDC10. Interacts (via the 6 Kelch repeats) with PPP5C.

It localises to the nucleus. The protein resides in the cytoplasm. It participates in protein modification; protein ubiquitination. Functionally, substrate-recognition component of a Cul2-RING (CRL2) E3 ubiquitin-protein ligase complex of the DesCEND (destruction via C-end degrons) pathway, which recognizes a C-degron located at the extreme C-terminus of target proteins, leading to their ubiquitination and degradation. The C-degron recognized by the DesCEND pathway is usually a motif of less than ten residues and can be present in full-length proteins, truncated proteins or proteolytically cleaved forms. The CRL2(KLHDC10) complex specifically recognizes proteins with a proline-glycine (Pro-Gly) or an alanine tail (CAT tail) at the C-terminus, leading to their ubiquitination and degradation. The CRL2(KLHDC10) complex is involved in the ribosome-associated quality control (RQC) pathway, which mediates the extraction of incompletely synthesized nascent chains from stalled ribosomes: CRL2(KLHDC10) acts downstream of NEMF and recognizes CAT tails associated with stalled nascent chains, leading to their ubiquitination and degradation. Participates in the oxidative stress-induced cell death through MAP3K5 activation. Inhibits PPP5C phosphatase activity on MAP3K5. Acts as a regulator of necroptosis. The chain is Kelch domain-containing protein 10 from Mus musculus (Mouse).